We begin with the raw amino-acid sequence, 159 residues long: 17 kDa surface antigen (159 aa).

A signal peptide spans 1–19 (MKLLSKIMIIALAASMLQA). The N-palmitoyl cysteine moiety is linked to residue Cys-20. Cys-20 carries the S-diacylglycerol cysteine lipid modification.

This sequence belongs to the rickettsiale 17 kDa surface antigen family.

The protein localises to the cell outer membrane. The polypeptide is 17 kDa surface antigen (omp) (Rickettsia prowazekii (strain Madrid E)).